Reading from the N-terminus, the 269-residue chain is Phosphonoacetaldehyde hydrolase (269 aa).

D10 functions as the Nucleophile in the catalytic mechanism. Residues D10 and A12 each coordinate Mg(2+). The Schiff-base intermediate with substrate role is filled by K52. D186 is a Mg(2+) binding site.

Belongs to the HAD-like hydrolase superfamily. PhnX family. As to quaternary structure, homodimer. Mg(2+) is required as a cofactor.

The catalysed reaction is phosphonoacetaldehyde + H2O = acetaldehyde + phosphate + H(+). Functionally, involved in phosphonate degradation. The protein is Phosphonoacetaldehyde hydrolase of Salmonella agona (strain SL483).